Consider the following 562-residue polypeptide: Putative transport protein PC1_1686 (562 aa).

A run of 6 helical transmembrane segments spans residues 8–28 (LLNG…LCLG), 32–52 (LGPV…LLGQ), 66–86 (FMLF…SIFF), 93–113 (FMLA…LGKF), 116–136 (WGIG…PVLV), and 158–178 (HLSL…IFGA). RCK C-terminal domains lie at 202 to 288 (LDAD…NFRD) and 292 to 373 (VFDR…RIGF). Transmembrane regions (helical) follow at residues 383–403 (LLAF…TIQF), 406–426 (FTFG…LGFL), 447–467 (FGLM…INSS), 478–498 (SGLI…AYVL), and 537–557 (GTYA…VIIW).

Belongs to the AAE transporter (TC 2.A.81) family. YbjL subfamily.

The protein localises to the cell membrane. This chain is Putative transport protein PC1_1686, found in Pectobacterium carotovorum subsp. carotovorum (strain PC1).